A 138-amino-acid polypeptide reads, in one-letter code: Cysteine desulfuration protein SufE (138 aa).

Catalysis depends on cysteine 51, which acts as the Cysteine persulfide intermediate.

Belongs to the SufE family. In terms of assembly, homodimer. Interacts with SufS.

It is found in the cytoplasm. It functions in the pathway cofactor biosynthesis; iron-sulfur cluster biosynthesis. Participates in cysteine desulfuration mediated by SufS. Cysteine desulfuration mobilizes sulfur from L-cysteine to yield L-alanine and constitutes an essential step in sulfur metabolism for biosynthesis of a variety of sulfur-containing biomolecules. Functions as a sulfur acceptor for SufS, by mediating the direct transfer of the sulfur atom from the S-sulfanylcysteine of SufS, an intermediate product of cysteine desulfuration process. The sequence is that of Cysteine desulfuration protein SufE from Photorhabdus laumondii subsp. laumondii (strain DSM 15139 / CIP 105565 / TT01) (Photorhabdus luminescens subsp. laumondii).